We begin with the raw amino-acid sequence, 1158 residues long: Voltage-gated inwardly rectifying potassium channel KCNH2 (1158 aa).

Residues 1–402 lie on the Cytoplasmic side of the membrane; it reads MPVRRGHVAP…RIHRWTILHY (402 aa). Positions 17–88 constitute a PAS domain; sequence TIIRKFEGQS…AAQIAQALLG (72 aa). In terms of domain architecture, PAC spans 92–144; sequence RKVEIAFYRKDGSCFLCLVDVVPVKNEDGAVIMFILNFEVVMEKDMVGSPTHD. A disordered region spans residues 232 to 314; the sequence is RALVGSSSPP…GAMHPLRGGL (83 aa). Ser239 carries the phosphoserine modification. Positions 258–269 are enriched in polar residues; sequence PDASGSSCSLAR. Ser283, Ser284, Ser319, and Ser350 each carry phosphoserine. Residues 403–423 traverse the membrane as a helical segment; that stretch reads SPFKAVWDWLILLLVIYTAVF. The Extracellular portion of the chain corresponds to 424-449; it reads TPYSAAFLLKETEEGPPAPDCGYACQ. A helical transmembrane segment spans residues 450 to 470; the sequence is PLAVVDFIVDIMFIVDILINF. At 471 to 494 the chain is on the cytoplasmic side; sequence RTTYVNANEEVVSHPGRIAVHYFK. The helical transmembrane segment at 495 to 515 threads the bilayer; that stretch reads GWFLIDMVAAIPFDLLIFGSG. Residues 516-519 lie on the Extracellular side of the membrane; sequence SEEL. A helical; Voltage-sensor membrane pass occupies residues 520 to 540; sequence IGLLKTARLLRLVRVARKLDR. Topologically, residues 541–546 are cytoplasmic; sequence YSEYGA. A helical membrane pass occupies residues 547–567; it reads AVLFLLMCTFALIAHWLACIW. At 568–610 the chain is on the extracellular side; it reads YAIGNMEQPHMDSRIGWLHNLGDQIGKPYNSSGLGGPSIKDKY. N-linked (GlcNAc...) asparagine glycosylation is present at Asn597. The segment at residues 611–631 is an intramembrane region (pore-forming); sequence VTALYFTFSSLTSVGFGNVSP. The Selectivity filter motif lies at 623-628; sequence SVGFGN. Residues 632–637 are Extracellular-facing; sequence NTNSEK. A helical transmembrane segment spans residues 638-658; sequence IFSICVMLIGSLMYASIFGNV. Residues 659-1158 lie on the Cytoplasmic side of the membrane; that stretch reads SAIIQRLYSG…LHRHGSDPGS (500 aa). Residues 741–841 form a cNMP-binding domain region; that stretch reads PFRGATKGCL…IHRDDLLEVL (101 aa). A disordered region spans residues 869 to 987; sequence GSPGSAELEG…KSSDTCNPLS (119 aa). 2 positions are modified to phosphoserine: Ser870 and Ser873. Basic residues predominate over residues 882–891; the sequence is RQRKRKLSFR. Gly residues predominate over residues 910–926; it reads GRAGAGPSGRGRPGGPW. Positions 927–938 are enriched in low complexity; it reads GESPSSGPSSPE. Positions 959–969 are enriched in pro residues; it reads SPRPPGEPPGG. Arg1013 carries the omega-N-methylarginine modification. Residues 1034-1061 adopt a coiled-coil conformation; sequence RGDVEGRLDALQRQLNRLETRLSADMAT. The interval 1116–1158 is disordered; it reads FEELPPGAPELPQDGPPRRLSLPGQLGALTSQPLHRHGSDPGS. A Phosphoserine modification is found at Ser1136.

This sequence belongs to the potassium channel family. H (Eag) (TC 1.A.1.20) subfamily. Kv11.1/KCNH2 sub-subfamily. In terms of assembly, the potassium channel is probably composed of a homo- or heterotetrameric complex of pore-forming alpha subunits that can associate with modulating beta subunits. Interacts with DNAJB12 and DNAJB14; chaperones DNAJB12 and DNAJB14 promote tetramerization. Heteromultimer with KCNH6/ERG2 and KCNH7/ERG3. Interacts with ALG10B. Forms a stable complex with KCNE1 or KCNE2, and that this heteromultimerization regulates Inward rectifier potassium channel activity. Interacts with CANX. The core-glycosylated, but not the fully glycosylated form interacts with RNF207. Interacts with NDFIP1 and NDFIP2; this interaction decreases the cell membrane expression by targeting KCNH2, through interaction with NEDD4L, for the degradation through the multivesicular bodies (MVBs)-lysosomal pathway. In terms of processing, phosphorylated on serine and threonine residues. Phosphorylation by PKA inhibits ion conduction. As to expression, highly expressed in left and right atria of the heart, in cortex and hippocampus; detected at intermediate levels in left and right ventricle, Purkinje fibers, cerebellum, thalamus and basal ganglia; detected at low levels in liver, spleen and kidney.

Its subcellular location is the cell membrane. It catalyses the reaction K(+)(in) = K(+)(out). Its function is as follows. Pore-forming (alpha) subunit of voltage-gated inwardly rectifying potassium channel. Characterized by unusual gating kinetics by producing relatively small outward currents during membrane depolarization and large inward currents during subsequent repolarization which reflect a rapid inactivation during depolarization and quick recovery from inactivation but slow deactivation (closing) during repolarization. Channel properties are modulated by cAMP and subunit assembly. Forms a stable complex with KCNE1 or KCNE2, and that this heteromultimerization regulates inward rectifier potassium channel activity. This chain is Voltage-gated inwardly rectifying potassium channel KCNH2, found in Canis lupus familiaris (Dog).